The following is a 172-amino-acid chain: Lipoprotein signal peptidase (172 aa).

4 helical membrane-spanning segments follow: residues 12–32 (TSAANGSLAPWLGVALIVILF), 43–63 (VFAYGVAHEVTSFFNLILVYN), 77–97 (WQRWAFTALGVVAALVICYLL), and 102–122 (GQKMFCTALALILGGALGNVI). Active-site residues include D132 and D150. A helical membrane pass occupies residues 142–162 (HWPAFNLADSAITVGAVLLVL).

It belongs to the peptidase A8 family.

It localises to the cell inner membrane. It catalyses the reaction Release of signal peptides from bacterial membrane prolipoproteins. Hydrolyzes -Xaa-Yaa-Zaa-|-(S,diacylglyceryl)Cys-, in which Xaa is hydrophobic (preferably Leu), and Yaa (Ala or Ser) and Zaa (Gly or Ala) have small, neutral side chains.. It participates in protein modification; lipoprotein biosynthesis (signal peptide cleavage). This protein specifically catalyzes the removal of signal peptides from prolipoproteins. This Paraburkholderia phytofirmans (strain DSM 17436 / LMG 22146 / PsJN) (Burkholderia phytofirmans) protein is Lipoprotein signal peptidase.